Here is a 731-residue protein sequence, read N- to C-terminus: Wall-associated receptor kinase-like 5 (731 aa).

The signal sequence occupies residues methionine 1–alanine 26. Topologically, residues alanine 27–valine 360 are extracellular. N-linked (GlcNAc...) asparagine glycosylation is found at asparagine 37, asparagine 43, asparagine 73, asparagine 96, asparagine 124, asparagine 137, asparagine 236, and asparagine 272. An atypical EGF-like region spans residues cysteine 285–cysteine 342. 3 disulfide bridges follow: cysteine 287–cysteine 300, cysteine 322–cysteine 333, and cysteine 328–cysteine 342. A helical transmembrane segment spans residues leucine 361 to isoleucine 381. The Cytoplasmic segment spans residues lysine 382–glutamate 731. The region spanning phenylalanine 432–isoleucine 705 is the Protein kinase domain. ATP contacts are provided by residues leucine 438–valine 446 and lysine 460. Residue tyrosine 505 is modified to Phosphotyrosine. Aspartate 557 serves as the catalytic Proton acceptor. Phosphothreonine is present on residues threonine 591 and threonine 596. Tyrosine 604 is modified (phosphotyrosine). Residues proline 709 to glutamate 731 are disordered.

Belongs to the protein kinase superfamily. Ser/Thr protein kinase family. In terms of tissue distribution, preferentially expressed in roots and flowers.

It is found in the membrane. The catalysed reaction is L-seryl-[protein] + ATP = O-phospho-L-seryl-[protein] + ADP + H(+). It carries out the reaction L-threonyl-[protein] + ATP = O-phospho-L-threonyl-[protein] + ADP + H(+). In terms of biological role, serine/threonine-protein kinase that may function as a signaling receptor of extracellular matrix component. May be involved in plant's response to pathogen infection. In Arabidopsis thaliana (Mouse-ear cress), this protein is Wall-associated receptor kinase-like 5 (WAKL5).